The sequence spans 259 residues: Phosphate import ATP-binding protein PstB (259 aa).

The 244-residue stretch at 11 to 254 (AEARNLNFYY…PQDKRTEDYI (244 aa)) folds into the ABC transporter domain. 43–50 (GPSGCGKS) is a binding site for ATP.

This sequence belongs to the ABC transporter superfamily. Phosphate importer (TC 3.A.1.7) family. The complex is composed of two ATP-binding proteins (PstB), two transmembrane proteins (PstC and PstA) and a solute-binding protein (PstS).

It localises to the cell inner membrane. It carries out the reaction phosphate(out) + ATP + H2O = ADP + 2 phosphate(in) + H(+). In terms of biological role, part of the ABC transporter complex PstSACB involved in phosphate import. Responsible for energy coupling to the transport system. The chain is Phosphate import ATP-binding protein PstB from Dechloromonas aromatica (strain RCB).